The sequence spans 344 residues: 2,3,4,5-tetrahydropyridine-2,6-dicarboxylate N-succinyltransferase (344 aa).

A Mg(2+)-binding site is contributed by Glu-205. Glu-221 (acyl-anhydride intermediate) is an active-site residue. Residues Arg-223, Gly-238, Ser-241, Ala-264, 279–280 (EA), Gly-287, Lys-304, and 317–320 (RRNS) contribute to the succinyl-CoA site.

The protein belongs to the type 2 tetrahydrodipicolinate N-succinyltransferase family. As to quaternary structure, homotrimer.

It localises to the cytoplasm. It catalyses the reaction (S)-2,3,4,5-tetrahydrodipicolinate + succinyl-CoA + H2O = (S)-2-succinylamino-6-oxoheptanedioate + CoA. Its pathway is amino-acid biosynthesis; L-lysine biosynthesis via DAP pathway; LL-2,6-diaminopimelate from (S)-tetrahydrodipicolinate (succinylase route): step 1/3. Catalyzes the conversion of the cyclic tetrahydrodipicolinate (THDP) into the acyclic N-succinyl-L-2-amino-6-oxopimelate using succinyl-CoA. In Pseudomonas putida (strain ATCC 47054 / DSM 6125 / CFBP 8728 / NCIMB 11950 / KT2440), this protein is 2,3,4,5-tetrahydropyridine-2,6-dicarboxylate N-succinyltransferase.